Consider the following 759-residue polypeptide: NADP-dependent malic enzyme (759 aa).

The segment at 1 to 428 (MDEQLKQSAL…KLTEFVYKTN (428 aa)) is malic enzyme. Tyr-39 (proton donor) is an active-site residue. Residue Lys-94 is the Proton acceptor of the active site. Glu-136, Asp-137, and Asp-162 together coordinate a divalent metal cation. NADP(+)-binding positions include 195-198 (AGAA), Asn-288, and Asn-320. Residues 429-759 (LFMKPIFSQA…AVVEAQTTPL (331 aa)) are phosphate acetyltransferase.

In the N-terminal section; belongs to the malic enzymes family. The protein in the C-terminal section; belongs to the phosphate acetyltransferase and butyryltransferase family. Requires Mg(2+) as cofactor. The cofactor is Mn(2+).

It carries out the reaction (S)-malate + NADP(+) = pyruvate + CO2 + NADPH. The catalysed reaction is oxaloacetate + H(+) = pyruvate + CO2. The sequence is that of NADP-dependent malic enzyme (maeB) from Salmonella typhimurium (strain LT2 / SGSC1412 / ATCC 700720).